The primary structure comprises 188 residues: Viral FLICE protein (188 aa).

2 consecutive DED domains span residues 2–74 (ATYE…DLLH) and 93–169 (PYQL…QVQT).

In terms of assembly, interacts with host RIPK1, TRAF2, MAP3K14, IKBKB, and IKBKG. Interacts with host CADM1; this interaction is essential for chronic NF-kappa-B activation.

Functionally, plays a role in the modulation of host signaling pathways by acting as an activator of both the classic and the alternative NF-kappa-B pathways. Thereby, initiates an important range of cellular processes to promote cell survival, proliferation and protection from apoptosis. The protein is Viral FLICE protein (ORF71) of Human herpesvirus 8 type P (isolate GK18) (HHV-8).